The primary structure comprises 85 residues: CRISPR-associated endoribonuclease Cas2 (85 aa).

Residue D8 participates in Mg(2+) binding.

The protein belongs to the CRISPR-associated endoribonuclease Cas2 protein family. Homodimer, forms a heterotetramer with a Cas1 homodimer. The cofactor is Mg(2+).

CRISPR (clustered regularly interspaced short palindromic repeat), is an adaptive immune system that provides protection against mobile genetic elements (viruses, transposable elements and conjugative plasmids). CRISPR clusters contain sequences complementary to antecedent mobile elements and target invading nucleic acids. CRISPR clusters are transcribed and processed into CRISPR RNA (crRNA). Functions as a ssRNA-specific endoribonuclease. Involved in the integration of spacer DNA into the CRISPR cassette. The protein is CRISPR-associated endoribonuclease Cas2 of Pyrococcus furiosus (strain ATCC 43587 / DSM 3638 / JCM 8422 / Vc1).